Reading from the N-terminus, the 128-residue chain is Gastrotropin (128 aa).

Position 2 is an N-acetylalanine (alanine 2).

The protein belongs to the calycin superfamily. Fatty-acid binding protein (FABP) family. In terms of tissue distribution, found exclusively in the ileum and to a lesser extent in distal jejunum.

The protein localises to the cytoplasm. It is found in the membrane. Functionally, binds to bile acids and is involved in enterohepatic bile acid metabolism. Required for efficient apical to basolateral transport of conjugated bile acids in ileal enterocytes. Stimulates gastric acid and pepsinogen secretion. In Sus scrofa (Pig), this protein is Gastrotropin (FABP6).